A 186-amino-acid polypeptide reads, in one-letter code: UPF0301 protein NTHI0415 (186 aa).

The protein belongs to the UPF0301 (AlgH) family.

This is UPF0301 protein NTHI0415 from Haemophilus influenzae (strain 86-028NP).